Consider the following 347-residue polypeptide: MEFCVLFGGASFEHEISIVSAIALKGVLKDRIKYFIFLDENHHFYLIEESNMHSKYFAQIKEKKLPPLILTHNGLLKNSFLGAKIIELPLVINLVHGGDGEDGKLASLLEFYRIAFIGPRIEASVLSYNKYLTKLYAKDLGVKTLDHVLLNEKNRANALDLMNFNFPFIIKPNNAGSSLGVNVVKEEKELVYALDGAFEYSKEVLIEPFIQGVKEYNLAGCKIKKDFCFSYVEEPNKQEFLDFKQKYLDFSRNKAPKANLSNALEEQLKENFKKLYNDLFDGAIIRCDFFVIKNEVYLNEINPIPGSLANYLFDDFKTTLENLAQSLPKTPKIQIKNSYLLQIQKNK.

The region spanning 134–332 (KLYAKDLGVK…LAQSLPKTPK (199 aa)) is the ATP-grasp domain. 161 to 216 (LMNFNFPFIIKPNNAGSSLGVNVVKEEKELVYALDGAFEYSKEVLIEPFIQGVKEY) is a binding site for ATP. Mg(2+)-binding residues include D288, E300, and N302.

This sequence belongs to the D-alanine--D-alanine ligase family. It depends on Mg(2+) as a cofactor. The cofactor is Mn(2+).

The protein localises to the cytoplasm. The enzyme catalyses 2 D-alanine + ATP = D-alanyl-D-alanine + ADP + phosphate + H(+). Its pathway is cell wall biogenesis; peptidoglycan biosynthesis. Cell wall formation. The sequence is that of D-alanine--D-alanine ligase from Helicobacter pylori (strain ATCC 700392 / 26695) (Campylobacter pylori).